The chain runs to 277 residues: NADPH-dependent 7-cyano-7-deazaguanine reductase (277 aa).

83–85 (IES) lines the substrate pocket. 85–86 (SK) is a binding site for NADPH. Cys184 serves as the catalytic Thioimide intermediate. The Proton donor role is filled by Asp191. Residue 223 to 224 (HE) coordinates substrate. Residue 252–253 (RG) participates in NADPH binding.

Belongs to the GTP cyclohydrolase I family. QueF type 2 subfamily. Homodimer.

Its subcellular location is the cytoplasm. The catalysed reaction is 7-aminomethyl-7-carbaguanine + 2 NADP(+) = 7-cyano-7-deazaguanine + 2 NADPH + 3 H(+). It functions in the pathway tRNA modification; tRNA-queuosine biosynthesis. Catalyzes the NADPH-dependent reduction of 7-cyano-7-deazaguanine (preQ0) to 7-aminomethyl-7-deazaguanine (preQ1). The protein is NADPH-dependent 7-cyano-7-deazaguanine reductase of Cupriavidus pinatubonensis (strain JMP 134 / LMG 1197) (Cupriavidus necator (strain JMP 134)).